Here is a 964-residue protein sequence, read N- to C-terminus: Translation initiation factor IF-2 (964 aa).

A compositionally biased stretch (basic and acidic residues) spans 1–10; sequence MSDKTNDDKT. Positions 1–379 are disordered; it reads MSDKTNDDKT…SQMQETREKI (379 aa). Residues 27 to 37 show a composition bias toward polar residues; the sequence is EQSTVRQNFSH. Residues 77–102 show a composition bias toward low complexity; sequence APAASTPAPAQAAQPAQAAPVVRAPA. Positions 103–113 are enriched in pro residues; the sequence is PATPAPKPAAP. A compositionally biased stretch (low complexity) spans 114 to 140; the sequence is AAPVTKPHVAQQRPAQQRPGGQQAQRP. Composition is skewed to basic and acidic residues over residues 156 to 227 and 234 to 243; these read SEMD…EAAK and ARTERRDDAR. Low complexity predominate over residues 250–278; sequence RPQQAGRPQGNRPPQGGRPQQGGPRPAAP. Positions 323–338 are enriched in basic and acidic residues; sequence PEVRAPKVVKTEDDRR. Positions 462–629 constitute a tr-type G domain; it reads SRPPVVTIMG…AILLQAEILD (168 aa). The interval 471–478 is G1; the sequence is GHVDHGKT. Position 471–478 (471–478) interacts with GTP; it reads GHVDHGKT. The G2 stretch occupies residues 496-500; the sequence is GITQH. The G3 stretch occupies residues 517–520; it reads DTPG. GTP-binding positions include 517–521 and 571–574; these read DTPGH and NKID. Residues 571–574 form a G4 region; that stretch reads NKID. The segment at 607–609 is G5; the sequence is SAK.

This sequence belongs to the TRAFAC class translation factor GTPase superfamily. Classic translation factor GTPase family. IF-2 subfamily.

Its subcellular location is the cytoplasm. One of the essential components for the initiation of protein synthesis. Protects formylmethionyl-tRNA from spontaneous hydrolysis and promotes its binding to the 30S ribosomal subunits. Also involved in the hydrolysis of GTP during the formation of the 70S ribosomal complex. In Brucella anthropi (strain ATCC 49188 / DSM 6882 / CCUG 24695 / JCM 21032 / LMG 3331 / NBRC 15819 / NCTC 12168 / Alc 37) (Ochrobactrum anthropi), this protein is Translation initiation factor IF-2.